The primary structure comprises 124 residues: Holo-[acyl-carrier-protein] synthase (124 aa).

D8 and E55 together coordinate Mg(2+).

It belongs to the P-Pant transferase superfamily. AcpS family. It depends on Mg(2+) as a cofactor.

The protein resides in the cytoplasm. The enzyme catalyses apo-[ACP] + CoA = holo-[ACP] + adenosine 3',5'-bisphosphate + H(+). Transfers the 4'-phosphopantetheine moiety from coenzyme A to a Ser of acyl-carrier-protein. The polypeptide is Holo-[acyl-carrier-protein] synthase (Desulfovibrio desulfuricans (strain ATCC 27774 / DSM 6949 / MB)).